Consider the following 241-residue polypeptide: Carboxy-S-adenosyl-L-methionine synthase (241 aa).

S-adenosyl-L-methionine is bound by residues Tyr-38, Gly-63 to Ser-65, Asp-88 to Asn-89, Asp-116 to Ile-117, Asn-131, and Arg-198.

Belongs to the class I-like SAM-binding methyltransferase superfamily. Cx-SAM synthase family. Homodimer.

The enzyme catalyses prephenate + S-adenosyl-L-methionine = carboxy-S-adenosyl-L-methionine + 3-phenylpyruvate + H2O. Functionally, catalyzes the conversion of S-adenosyl-L-methionine (SAM) to carboxy-S-adenosyl-L-methionine (Cx-SAM). In Histophilus somni (strain 2336) (Haemophilus somnus), this protein is Carboxy-S-adenosyl-L-methionine synthase.